Consider the following 156-residue polypeptide: Small ribosomal subunit protein uS7 (156 aa).

The protein belongs to the universal ribosomal protein uS7 family. Part of the 30S ribosomal subunit. Contacts proteins S9 and S11.

Its function is as follows. One of the primary rRNA binding proteins, it binds directly to 16S rRNA where it nucleates assembly of the head domain of the 30S subunit. Is located at the subunit interface close to the decoding center, probably blocks exit of the E-site tRNA. This chain is Small ribosomal subunit protein uS7, found in Tremblaya princeps.